The chain runs to 132 residues: MSDIQTSTVSEDGFACTSQVGDFDLQIDATDETGPNPNAALVATYASCFLPAFRVGGQKTGFDDLGKVQIDADADLDDSDDLERISFDVYVESDLSDDEFAEITELAEDICHVHDALRDELQADVTVVGDAF.

A Glycyl lysine isopeptide (Lys-Gly) (interchain with G-Cter in SAMP2) cross-link involves residue K59.

Belongs to the OsmC/Ohr family.

This is an uncharacterized protein from Haloferax volcanii (strain ATCC 29605 / DSM 3757 / JCM 8879 / NBRC 14742 / NCIMB 2012 / VKM B-1768 / DS2) (Halobacterium volcanii).